Here is a 504-residue protein sequence, read N- to C-terminus: Maturase K (504 aa).

The protein belongs to the intron maturase 2 family. MatK subfamily.

Its subcellular location is the plastid. It localises to the chloroplast. Usually encoded in the trnK tRNA gene intron. Probably assists in splicing its own and other chloroplast group II introns. This chain is Maturase K, found in Fagus japonica (Japanese beech).